The sequence spans 425 residues: Beta-1,4-galactosyltransferase galt-1 (425 aa).

At 1-8 (MPRITASK) the chain is on the cytoplasmic side. The chain crosses the membrane as a helical; Signal-anchor for type II membrane protein span at residues 9–29 (IVLLIALSFCITVIYHFPIAT). Residues 30-425 (RSSKEYDEYG…FDSVVGLLDL (396 aa)) lie on the Lumenal side of the membrane. N-linked (GlcNAc...) asparagine glycans are attached at residues Asn109 and Asn152. A GT92 domain is found at 189-394 (KMSICVPALF…LLRVYHYKDK (206 aa)).

The protein belongs to the glycosyltransferase 92 family. The cofactor is Mn(2+). In terms of processing, N-glycosylated. In terms of tissue distribution, expressed in intestine and coelomocytes.

It localises to the golgi apparatus. Its subcellular location is the golgi stack membrane. Inhibited by EDTA, Cu(2+) and Zn(2+). Functionally, catalyzes the transfer of beta-galactose from UDP-galactose to position 4 of alpha-1,6-linked fucose at the reducing end GlcNAc in N-glycan cores. Involved in susceptibility to the nematotoxic C.cinerea galectin Cgl2, likely by contributing to the synthesis of core alpha-1,6-fucosylated N-glycans to which Cgl2 binds. The polypeptide is Beta-1,4-galactosyltransferase galt-1 (Caenorhabditis elegans).